The following is a 272-amino-acid chain: Bifunctional protein FolD (272 aa).

NADP(+) is bound by residues 155–157 (GRS), Ser182, and Ile223.

This sequence belongs to the tetrahydrofolate dehydrogenase/cyclohydrolase family. In terms of assembly, homodimer.

It carries out the reaction (6R)-5,10-methylene-5,6,7,8-tetrahydrofolate + NADP(+) = (6R)-5,10-methenyltetrahydrofolate + NADPH. It catalyses the reaction (6R)-5,10-methenyltetrahydrofolate + H2O = (6R)-10-formyltetrahydrofolate + H(+). It functions in the pathway one-carbon metabolism; tetrahydrofolate interconversion. Functionally, catalyzes the oxidation of 5,10-methylenetetrahydrofolate to 5,10-methenyltetrahydrofolate and then the hydrolysis of 5,10-methenyltetrahydrofolate to 10-formyltetrahydrofolate. The sequence is that of Bifunctional protein FolD from Fervidobacterium nodosum (strain ATCC 35602 / DSM 5306 / Rt17-B1).